A 697-amino-acid polypeptide reads, in one-letter code: CENP-A multicopy suppressor protein 2 (697 aa).

The segment at 351 to 378 adopts a GATA-type; atypical zinc-finger fold; that stretch reads CQNCGTIKTANWRNATYMNITLMLCNAC. The interval 443-484 is disordered; it reads PLNRLTSLDSTHSAPDPNHISKPSVVNQQKSRGGPRTAKLKN. Residues 445 to 455 are compositionally biased toward polar residues; that stretch reads NRLTSLDSTHS.

As to quaternary structure, interacts with CENP-A.

Its subcellular location is the nucleus. The protein resides in the chromosome. It is found in the centromere. Its function is as follows. Required for proper chromosome segregation via regulation of CENP-A localization to the centromere. This chain is CENP-A multicopy suppressor protein 2 (ams2), found in Schizosaccharomyces pombe (strain 972 / ATCC 24843) (Fission yeast).